The following is a 237-amino-acid chain: ATP synthase subunit 4, mitochondrial (237 aa).

Residues 1–30 constitute a mitochondrion transit peptide; the sequence is MFRALTLKASARPVVAGLCSRQAPIAAVRY.

This sequence belongs to the eukaryotic ATPase B chain family.

The protein resides in the mitochondrion. The protein localises to the mitochondrion inner membrane. Mitochondrial membrane ATP synthase (F(1)F(0) ATP synthase or Complex V) produces ATP from ADP in the presence of a proton gradient across the membrane which is generated by electron transport complexes of the respiratory chain. F-type ATPases consist of two structural domains, F(1) - containing the extramembraneous catalytic core, and F(0) - containing the membrane proton channel, linked together by a central stalk and a peripheral stalk. During catalysis, ATP synthesis in the catalytic domain of F(1) is coupled via a rotary mechanism of the central stalk subunits to proton translocation. Part of the complex F(0) domain and the peripheric stalk, which acts as a stator to hold the catalytic alpha(3)beta(3) subcomplex and subunit a/ATP6 static relative to the rotary elements. The protein is ATP synthase subunit 4, mitochondrial (ATP4) of Kluyveromyces lactis (strain ATCC 8585 / CBS 2359 / DSM 70799 / NBRC 1267 / NRRL Y-1140 / WM37) (Yeast).